A 226-amino-acid polypeptide reads, in one-letter code: ATP-dependent dethiobiotin synthetase BioD (226 aa).

An ATP-binding site is contributed by 12–17 (GIGKTV). T16 serves as a coordination point for Mg(2+). The active site involves K37. T41 serves as a coordination point for substrate. ATP is bound by residues D49, 108-111 (EGAG), 169-170 (GS), and 197-199 (PAG). D49 and E108 together coordinate Mg(2+).

The protein belongs to the dethiobiotin synthetase family. As to quaternary structure, homodimer. Mg(2+) is required as a cofactor.

It is found in the cytoplasm. It catalyses the reaction (7R,8S)-7,8-diammoniononanoate + CO2 + ATP = (4R,5S)-dethiobiotin + ADP + phosphate + 3 H(+). It functions in the pathway cofactor biosynthesis; biotin biosynthesis; biotin from 7,8-diaminononanoate: step 1/2. In terms of biological role, catalyzes a mechanistically unusual reaction, the ATP-dependent insertion of CO2 between the N7 and N8 nitrogen atoms of 7,8-diaminopelargonic acid (DAPA, also called 7,8-diammoniononanoate) to form a ureido ring. This chain is ATP-dependent dethiobiotin synthetase BioD, found in Mycolicibacterium gilvum (strain PYR-GCK) (Mycobacterium gilvum (strain PYR-GCK)).